A 117-amino-acid chain; its full sequence is MSQRDTGAHYENLARRHLERAGLVFQAANVAFRGGEIDLIMRDGDAWVFVEVRFRRNDLFGGAAASITPRKQQRLHLAAAVWLAQRGASFATTSCRFDVVAITGNQLEWLPNAFNTD.

It belongs to the UPF0102 family.

The sequence is that of UPF0102 protein YPN_3432 from Yersinia pestis bv. Antiqua (strain Nepal516).